Consider the following 588-residue polypeptide: Transcription factor tau 60 kDa subunit (588 aa).

Residues 399-588 (LPKLPENFSM…VYCGTTLEVM (190 aa)) are sufficient for SPT15-binding.

As to quaternary structure, heterodimer with TFC6. Component of the TFIIIC complex composed of TFC1, TFC3, TFC4, TFC6, TFC7 and TFC8. The subunits are organized in two globular domains, tauA and tauB, connected by a proteolysis-sensitive and flexible linker. Interacts with SPT15 and directly with TFC6.

Its subcellular location is the nucleus. Functionally, TFIIIC mediates tRNA and 5S RNA gene activation by binding to intragenic promoter elements. Upstream of the transcription start site, TFIIIC assembles the initiation complex TFIIIB-TFIIIC-tDNA, which is sufficient for RNA polymerase III recruitment and function. Part of the tauB domain of TFIIIC that binds boxB DNA promoter sites of tRNA and similar genes. Plays a role in TFIIB assembly through its interaction with SPT15/TBP. Essential for cell viability. The polypeptide is Transcription factor tau 60 kDa subunit (TFC8) (Saccharomyces cerevisiae (strain ATCC 204508 / S288c) (Baker's yeast)).